Reading from the N-terminus, the 253-residue chain is Hydroxyacylglutathione hydrolase (253 aa).

His59, His61, Asp63, His64, His118, Asp143, and His181 together coordinate Zn(2+).

The protein belongs to the metallo-beta-lactamase superfamily. Glyoxalase II family. In terms of assembly, monomer. It depends on Zn(2+) as a cofactor.

The catalysed reaction is an S-(2-hydroxyacyl)glutathione + H2O = a 2-hydroxy carboxylate + glutathione + H(+). The protein operates within secondary metabolite metabolism; methylglyoxal degradation; (R)-lactate from methylglyoxal: step 2/2. Thiolesterase that catalyzes the hydrolysis of S-D-lactoyl-glutathione to form glutathione and D-lactic acid. This Prochlorococcus marinus (strain MIT 9211) protein is Hydroxyacylglutathione hydrolase.